Here is a 358-residue protein sequence, read N- to C-terminus: Uroporphyrinogen decarboxylase (358 aa).

Substrate-binding positions include 36-40 (RQAGR), Asp-85, Tyr-160, Ser-215, and His-338.

It belongs to the uroporphyrinogen decarboxylase family. Homodimer.

It localises to the cytoplasm. It catalyses the reaction uroporphyrinogen III + 4 H(+) = coproporphyrinogen III + 4 CO2. It participates in porphyrin-containing compound metabolism; protoporphyrin-IX biosynthesis; coproporphyrinogen-III from 5-aminolevulinate: step 4/4. Functionally, catalyzes the decarboxylation of four acetate groups of uroporphyrinogen-III to yield coproporphyrinogen-III. In Corynebacterium glutamicum (strain ATCC 13032 / DSM 20300 / JCM 1318 / BCRC 11384 / CCUG 27702 / LMG 3730 / NBRC 12168 / NCIMB 10025 / NRRL B-2784 / 534), this protein is Uroporphyrinogen decarboxylase.